The following is a 582-amino-acid chain: MKRSMYAGRVREEHIGTTITLKGWVSRRRDLGGLIFIDLRDREGVMQLVINPEEVSSDVMATAERLRSEYVIEVEGFVEARQQANDKLATGMVELKVSALTILNTAKTTPFEIKDDVEVSDDTRLRYRYLDLRRPEMLENFKLRAKVTHSIRNYLDDLEFIDVETPMLTKSTPEGARDYLVPSRVSQGHFYALPQSPQITKQLLMNAGFDRYYQIVKCFRDEDLRGDRQPEFTQVDLETSFLSEQEIQDIVEGMIAKVMKETKEIDVTLPFPRMSYDVAMNSYGSDKPDTRFEMLLQDLTVTVNGIDFKVFSEAPAVKAIVVKGNADRYSRKDIDKLTEFAKQFGAKGLAWVKVTDGQLAGPVAKFLIAIETELSSQLKLAENDLVLFVADTLEVANNTLGALRNRIAKDLDMIDQSQFNFLWVVDWPMFEWSEEEGRYMSAHHPFTLPTPESAHELEGDLAKVRAIAYDIVLNGYELGGGSLRINQKEMQERMFKALGFTADEANDQFGFLLEAMDYGFPPHGGLAIGLDRFVMLLAGKGNIREVIAFPKNNKASDPMTQAPSLVSENQLEELSLQIESHD.

L-aspartate is bound at residue Glu-174. The tract at residues 198-201 (QITK) is aspartate. Arg-220 is a binding site for L-aspartate. Residues 220–222 (RDE) and Gln-229 each bind ATP. Residue His-443 participates in L-aspartate binding. Residue Glu-477 coordinates ATP. Arg-484 is a binding site for L-aspartate. ATP is bound at residue 529-532 (GLDR).

It belongs to the class-II aminoacyl-tRNA synthetase family. Type 1 subfamily. As to quaternary structure, homodimer.

It is found in the cytoplasm. It carries out the reaction tRNA(Asp) + L-aspartate + ATP = L-aspartyl-tRNA(Asp) + AMP + diphosphate. Its function is as follows. Catalyzes the attachment of L-aspartate to tRNA(Asp) in a two-step reaction: L-aspartate is first activated by ATP to form Asp-AMP and then transferred to the acceptor end of tRNA(Asp). The polypeptide is Aspartate--tRNA ligase (Streptococcus pyogenes serotype M28 (strain MGAS6180)).